The sequence spans 755 residues: Ribosome biogenesis protein BOP1 (755 aa).

Composition is skewed to polar residues over residues 1 to 10 (MSQEPSSSFS) and 43 to 61 (ELSS…TEPN). The interval 1–65 (MSQEPSSSFS…PLTEPNNIPI (65 aa)) is disordered. The tract at residues 309-754 (MDSMLPTLPN…SGTDGVLRLF (446 aa)) is interaction with EB1. Residues 335–374 (TGTRRINGLTFSPKGMFFAVGGRDCILRVFETYSGRQVRA) form a WD 1 repeat. Positions 482–505 (YNEGSEDDDAAESARFNEERHQRG) are disordered. Residues 496-505 (RFNEERHQRG) are compositionally biased toward basic and acidic residues. 3 WD repeats span residues 617 to 655 (PGVK…EPTA), 659 to 698 (YHTS…LVKM), and 725 to 755 (DGSV…RLFK).

This sequence belongs to the WD repeat BOP1/ERB1 family. Interacts (via C-terminal WD repeats) with giardin subunit beta. Interacts (via C-terminal WD repeats) with EB1.

Its subcellular location is the nucleus. It is found in the nucleolus. It localises to the nucleus membrane. Its function is as follows. Required for maturation of ribosomal RNAs and formation of the large ribosomal subunit. The protein is Ribosome biogenesis protein BOP1 of Giardia intestinalis (Giardia lamblia).